We begin with the raw amino-acid sequence, 218 residues long: 3,4-dihydroxy-2-butanone 4-phosphate synthase (218 aa).

D-ribulose 5-phosphate is bound by residues 37-38 (RE), Asp-42, 150-154 (RGGHT), and Glu-174. Glu-38 lines the Mg(2+) pocket. His-153 is a Mg(2+) binding site.

The protein belongs to the DHBP synthase family. Homodimer. It depends on Mg(2+) as a cofactor. Mn(2+) is required as a cofactor.

The catalysed reaction is D-ribulose 5-phosphate = (2S)-2-hydroxy-3-oxobutyl phosphate + formate + H(+). It functions in the pathway cofactor biosynthesis; riboflavin biosynthesis; 2-hydroxy-3-oxobutyl phosphate from D-ribulose 5-phosphate: step 1/1. Functionally, catalyzes the conversion of D-ribulose 5-phosphate to formate and 3,4-dihydroxy-2-butanone 4-phosphate. This chain is 3,4-dihydroxy-2-butanone 4-phosphate synthase, found in Erwinia tasmaniensis (strain DSM 17950 / CFBP 7177 / CIP 109463 / NCPPB 4357 / Et1/99).